The primary structure comprises 128 residues: Large ribosomal subunit protein uL22 (128 aa).

This sequence belongs to the universal ribosomal protein uL22 family. Part of the 50S ribosomal subunit.

Functionally, this protein binds specifically to 23S rRNA; its binding is stimulated by other ribosomal proteins, e.g. L4, L17, and L20. It is important during the early stages of 50S assembly. It makes multiple contacts with different domains of the 23S rRNA in the assembled 50S subunit and ribosome. In terms of biological role, the globular domain of the protein is located near the polypeptide exit tunnel on the outside of the subunit, while an extended beta-hairpin is found that lines the wall of the exit tunnel in the center of the 70S ribosome. The sequence is that of Large ribosomal subunit protein uL22 from Nitrobacter hamburgensis (strain DSM 10229 / NCIMB 13809 / X14).